The following is a 393-amino-acid chain: NAD(P)H-quinone oxidoreductase subunit H, chloroplastic (393 aa).

This sequence belongs to the complex I 49 kDa subunit family. In terms of assembly, NDH is composed of at least 16 different subunits, 5 of which are encoded in the nucleus.

The protein resides in the plastid. The protein localises to the chloroplast thylakoid membrane. The enzyme catalyses a plastoquinone + NADH + (n+1) H(+)(in) = a plastoquinol + NAD(+) + n H(+)(out). It carries out the reaction a plastoquinone + NADPH + (n+1) H(+)(in) = a plastoquinol + NADP(+) + n H(+)(out). NDH shuttles electrons from NAD(P)H:plastoquinone, via FMN and iron-sulfur (Fe-S) centers, to quinones in the photosynthetic chain and possibly in a chloroplast respiratory chain. The immediate electron acceptor for the enzyme in this species is believed to be plastoquinone. Couples the redox reaction to proton translocation, and thus conserves the redox energy in a proton gradient. The sequence is that of NAD(P)H-quinone oxidoreductase subunit H, chloroplastic from Anthoceros angustus (Hornwort).